The chain runs to 169 residues: Large ribosomal subunit protein uL10 (169 aa).

The protein belongs to the universal ribosomal protein uL10 family. In terms of assembly, part of the ribosomal stalk of the 50S ribosomal subunit. The N-terminus interacts with L11 and the large rRNA to form the base of the stalk. The C-terminus forms an elongated spine to which L12 dimers bind in a sequential fashion forming a multimeric L10(L12)X complex.

In terms of biological role, forms part of the ribosomal stalk, playing a central role in the interaction of the ribosome with GTP-bound translation factors. This is Large ribosomal subunit protein uL10 from Rickettsia rickettsii (strain Iowa).